The sequence spans 196 residues: Chorion protein S19 (196 aa).

A signal peptide spans 1–16; that stretch reads MNTFATLAIFISACLA.

The protein belongs to the chorion protein S19 family.

It is found in the secreted. Chorion membrane (egg shell) protein; plays a role in protecting the egg from the environment. The chain is Chorion protein S19 (Cp19) from Drosophila grimshawi (Hawaiian fruit fly).